A 229-amino-acid chain; its full sequence is Ribonuclease 3 (229 aa).

Residues 5–127 (LNRLERKLGH…LIGAIYLDAG (123 aa)) form the RNase III domain. Glu-40 is a binding site for Mg(2+). The active site involves Asp-44. The Mg(2+) site is built by Asp-113 and Glu-116. The active site involves Glu-116. The 71-residue stretch at 154–224 (DPKTRLQEFL…AAAALVALGV (71 aa)) folds into the DRBM domain.

It belongs to the ribonuclease III family. In terms of assembly, homodimer. Mg(2+) serves as cofactor.

The protein localises to the cytoplasm. It catalyses the reaction Endonucleolytic cleavage to 5'-phosphomonoester.. Functionally, digests double-stranded RNA. Involved in the processing of primary rRNA transcript to yield the immediate precursors to the large and small rRNAs (23S and 16S). Processes some mRNAs, and tRNAs when they are encoded in the rRNA operon. Processes pre-crRNA and tracrRNA of type II CRISPR loci if present in the organism. The protein is Ribonuclease 3 of Azotobacter vinelandii (strain DJ / ATCC BAA-1303).